The sequence spans 157 residues: MIRIGQGFDVHQLVPQRPLIIGGVTLPYEKGLLGHSDADVLTHAIIDAILGAAGLGDIGQLFPETDPQFKNANSVNLLKKVNEKVGRSGFTIGNIDCTILAEEPKMSPYLAEMKKNLAASCHLAVTQVNIKATTMETMGFVGKKEGIGAIAVALLEK.

Residues aspartate 9 and histidine 11 each contribute to the a divalent metal cation site. Residues 9-11 and 35-36 each bind 4-CDP-2-C-methyl-D-erythritol 2-phosphate; these read DVH and HS. An a divalent metal cation-binding site is contributed by histidine 43. 4-CDP-2-C-methyl-D-erythritol 2-phosphate contacts are provided by residues 57–59, 62–66, 133–136, phenylalanine 140, and lysine 143; these read DIG, FPETD, and TTME.

The protein belongs to the IspF family. As to quaternary structure, homotrimer. The cofactor is a divalent metal cation.

The catalysed reaction is 4-CDP-2-C-methyl-D-erythritol 2-phosphate = 2-C-methyl-D-erythritol 2,4-cyclic diphosphate + CMP. It functions in the pathway isoprenoid biosynthesis; isopentenyl diphosphate biosynthesis via DXP pathway; isopentenyl diphosphate from 1-deoxy-D-xylulose 5-phosphate: step 4/6. Involved in the biosynthesis of isopentenyl diphosphate (IPP) and dimethylallyl diphosphate (DMAPP), two major building blocks of isoprenoid compounds. Catalyzes the conversion of 4-diphosphocytidyl-2-C-methyl-D-erythritol 2-phosphate (CDP-ME2P) to 2-C-methyl-D-erythritol 2,4-cyclodiphosphate (ME-CPP) with a corresponding release of cytidine 5-monophosphate (CMP). The protein is 2-C-methyl-D-erythritol 2,4-cyclodiphosphate synthase of Enterococcus faecalis (strain ATCC 700802 / V583).